The sequence spans 157 residues: UPF0179 protein Mhun_1135 (157 aa).

This sequence belongs to the UPF0179 family.

This is UPF0179 protein Mhun_1135 from Methanospirillum hungatei JF-1 (strain ATCC 27890 / DSM 864 / NBRC 100397 / JF-1).